We begin with the raw amino-acid sequence, 311 residues long: Putative dihydroorotate dehydrogenase A (fumarate) (311 aa).

Substrate contacts are provided by residues lysine 45, 69–73 (NSMGL), and asparagine 128. An FMN-binding site is contributed by 45 to 46 (KT). Residue asparagine 128 participates in FMN binding. Cysteine 131 functions as the Nucleophile in the catalytic mechanism. Lysine 165 and valine 193 together coordinate FMN. Substrate is bound at residue 194 to 195 (NS). FMN is bound by residues glycine 220, 248-249 (GG), and 270-271 (GT).

The protein belongs to the dihydroorotate dehydrogenase family. Type 1 subfamily. Homodimer. It depends on FMN as a cofactor.

The protein resides in the cytoplasm. It carries out the reaction (S)-dihydroorotate + fumarate = orotate + succinate. Its pathway is pyrimidine metabolism; UMP biosynthesis via de novo pathway. Catalyzes the conversion of dihydroorotate to orotate with fumarate as the electron acceptor. The protein is Putative dihydroorotate dehydrogenase A (fumarate) (pyrD) of Streptococcus pyogenes serotype M3 (strain SSI-1).